The primary structure comprises 467 residues: Phosphoglucosamine mutase (467 aa).

Serine 120 acts as the Phosphoserine intermediate in catalysis. Mg(2+) is bound by residues serine 120, aspartate 261, aspartate 263, and aspartate 265. Serine 120 bears the Phosphoserine mark.

This sequence belongs to the phosphohexose mutase family. Mg(2+) serves as cofactor. In terms of processing, activated by phosphorylation.

The enzyme catalyses alpha-D-glucosamine 1-phosphate = D-glucosamine 6-phosphate. Its function is as follows. Catalyzes the conversion of glucosamine-6-phosphate to glucosamine-1-phosphate. The protein is Phosphoglucosamine mutase of Parafrankia sp. (strain EAN1pec).